The following is a 342-amino-acid chain: Cytosolic Fe-S cluster assembly factor NBP35 (342 aa).

Residues C33, C47, C50, and C56 each coordinate [4Fe-4S] cluster. G86–S93 lines the ATP pocket. [4Fe-4S] cluster contacts are provided by C259 and C262.

It belongs to the Mrp/NBP35 ATP-binding proteins family. NUBP1/NBP35 subfamily. As to quaternary structure, heterotetramer of 2 NBP35 and 2 CFD1 chains. [4Fe-4S] cluster is required as a cofactor.

The protein resides in the cytoplasm. Component of the cytosolic iron-sulfur (Fe/S) protein assembly (CIA) machinery. Required for maturation of extramitochondrial Fe-S proteins. The NBP35-CFD1 heterotetramer forms a Fe-S scaffold complex, mediating the de novo assembly of an Fe-S cluster and its transfer to target apoproteins. The sequence is that of Cytosolic Fe-S cluster assembly factor NBP35 from Gibberella zeae (strain ATCC MYA-4620 / CBS 123657 / FGSC 9075 / NRRL 31084 / PH-1) (Wheat head blight fungus).